A 132-amino-acid polypeptide reads, in one-letter code: Putative RNase AF_2433 (132 aa).

Catalysis depends on residues Arg90 and His95. An RX(4)HXY motif motif is present at residues 90-97 (RNWLVHRY). O-di-AMP-tyrosine is present on Tyr97.

This sequence belongs to the HepT RNase toxin family. In terms of assembly, homodimer, probably forms a complex with cognate antitoxin AF_2432. Modified by cognate antitoxin AF_2432; probably at least 2 successive AMPylation events occur on Tyr-97.

Probable toxic component of a putative type VII toxin-antitoxin (TA) system, probably an RNase. Probably neutralized by cognate antitoxin AF_2432. Neutralization may be due to AMPylation by AF_2432. This Archaeoglobus fulgidus (strain ATCC 49558 / DSM 4304 / JCM 9628 / NBRC 100126 / VC-16) protein is Putative RNase AF_2433.